The sequence spans 535 residues: Phosphoenolpyruvate carboxykinase (ATP) (535 aa).

3 residues coordinate substrate: Arg59, Tyr201, and Lys207. Residues Lys207, His226, and 243–251 (GLSGTGKTT) contribute to the ATP site. Residues Lys207 and His226 each contribute to the Mn(2+) site. Asp264 lines the Mn(2+) pocket. ATP-binding positions include Glu292, Arg328, 444-445 (RI), and Thr450. Arg328 provides a ligand contact to substrate.

Belongs to the phosphoenolpyruvate carboxykinase (ATP) family. Requires Mn(2+) as cofactor.

Its subcellular location is the cytoplasm. The catalysed reaction is oxaloacetate + ATP = phosphoenolpyruvate + ADP + CO2. It participates in carbohydrate biosynthesis; gluconeogenesis. In terms of biological role, involved in the gluconeogenesis. Catalyzes the conversion of oxaloacetate (OAA) to phosphoenolpyruvate (PEP) through direct phosphoryl transfer between the nucleoside triphosphate and OAA. The protein is Phosphoenolpyruvate carboxykinase (ATP) of Bacteroides thetaiotaomicron (strain ATCC 29148 / DSM 2079 / JCM 5827 / CCUG 10774 / NCTC 10582 / VPI-5482 / E50).